Consider the following 209-residue polypeptide: Bcl-2 homologous antagonist/killer (209 aa).

The tract at residues 1–28 is disordered; the sequence is MASGQGPGPPKVGCDESPSPSEQQVAQD. The residue at position 2 (Ala2) is an N-acetylalanine. Residues 18-27 show a composition bias toward polar residues; sequence PSPSEQQVAQ. A BH3 motif is present at residues 72 to 86; sequence VGRQLALIGDDINRR. The BH1 signature appears at 115–134; sequence SLFKSGISWGRVVALLGFGY. Asp158 and His162 together coordinate Zn(2+). The BH2 motif lies at 167 to 182; it reads RWIAQRGGWVAALNFR. Residues 186-203 traverse the membrane as a helical segment; the sequence is ILTVMVIFGVVLLGQFVV.

Belongs to the Bcl-2 family. In terms of assembly, homodimer. Formation of the homodimer is zinc-dependent. Forms heterodimers with BCL2 and BCL2L1 isoform Bcl-X(L). Forms heterooligomers with BAX. Interacts with BCL2A1. Interacts withRTL10/BOP. Interacts with VDAC1. Interacts with GIMAP3/IAN4 and GIMAP5/IAN5. As to quaternary structure, (Microbial infection) Interacts with gamma-herpesvirus 68 protein vBCL2. As to expression, widely expressed.

It localises to the mitochondrion outer membrane. Its function is as follows. In the presence of an appropriate stimulus, accelerates programmed cell death by binding to, and antagonizing the anti-apoptotic action of BCL2. The sequence is that of Bcl-2 homologous antagonist/killer (Bak1) from Mus musculus (Mouse).